The sequence spans 459 residues: uncharacterized protein (459 aa).

Positions P5 to K63 constitute a TRAM domain. Residues C76, C82, C85, and C166 each contribute to the [4Fe-4S] cluster site. The S-adenosyl-L-methionine site is built by Q290, Y319, D340, and D388. C415 serves as the catalytic Nucleophile.

It belongs to the class I-like SAM-binding methyltransferase superfamily. RNA M5U methyltransferase family.

This is an uncharacterized protein from Listeria monocytogenes serotype 4b (strain F2365).